A 101-amino-acid polypeptide reads, in one-letter code: Large ribosomal subunit protein P1 (101 aa).

The disordered stretch occupies residues 65 to 89 (AAPAAAPAEEPKEEKKEEKKEEDTT). The segment covering 73-87 (EEPKEEKKEEKKEED) has biased composition (basic and acidic residues).

It belongs to the eukaryotic ribosomal protein P1/P2 family. As to quaternary structure, part of the 50S ribosomal subunit. Homodimer, it forms part of the ribosomal stalk which helps the ribosome interact with GTP-bound translation factors. Forms a heptameric uL10/P0(P1)2(P1)2(P1)2 complex, where uL10/P0 forms an elongated spine to which the P1 dimers bind in a sequential fashion.

In terms of biological role, forms part of the ribosomal stalk, playing a central role in the interaction of the ribosome with GTP-bound translation factors. The polypeptide is Large ribosomal subunit protein P1 (Methanothermococcus thermolithotrophicus (Methanococcus thermolithotrophicus)).